A 176-amino-acid polypeptide reads, in one-letter code: Inner membrane-spanning protein YciB (176 aa).

The next 6 helical transmembrane spans lie at F3 to F23, T24 to H44, T49 to H69, K72 to A92, L121 to F141, and F149 to L169.

Belongs to the YciB family.

The protein resides in the cell inner membrane. Functionally, plays a role in cell envelope biogenesis, maintenance of cell envelope integrity and membrane homeostasis. This Burkholderia cenocepacia (strain ATCC BAA-245 / DSM 16553 / LMG 16656 / NCTC 13227 / J2315 / CF5610) (Burkholderia cepacia (strain J2315)) protein is Inner membrane-spanning protein YciB.